Consider the following 222-residue polypeptide: MGLFGKTQEKPPKELVNEWSLKIRKEMRVVDRQIRDIQREEEKVKRSVKDAAKKGQKDVCVVLAKEMIRSRKAVSKLYASKAHMNSVLMGMKNQLAVLRVAGSLQKSTEVMKAMQSLVKIPEIQATMRELSKEMMKAGIIEEMLEDTFESMDDQEEMEEAAEMEIDRILFEITAGALGKAPSKVTDALPEPEPLGAMAASEDEEEEEEALEAMQSRLATLRS.

Glycine 2 carries N-myristoyl glycine lipidation. Residues 2–113 (GLFGKTQEKP…LQKSTEVMKA (112 aa)) are intramolecular interaction with C-terminus. The stretch at 22–54 (KIRKEMRVVDRQIRDIQREEEKVKRSVKDAAKK) forms a coiled coil. Important for autoinhibitory function stretches follow at residues 59 to 64 (VCVVLA) and 168 to 169 (IL). Positions 149-222 (ESMDDQEEME…MQSRLATLRS (74 aa)) form a coiled coil. Residues 151-220 (MDDQEEMEEA…EAMQSRLATL (70 aa)) form an intramolecular interaction with N-terminus region. The tract at residues 151–222 (MDDQEEMEEA…MQSRLATLRS (72 aa)) is interaction with VPS4A. Lysine 179 is covalently cross-linked (Glycyl lysine isopeptide (Lys-Gly) (interchain with G-Cter in ubiquitin)). Residues 180 to 222 (APSKVTDALPEPEPLGAMAASEDEEEEEEALEAMQSRLATLRS) form a disordered region. 3 interaction with STAMBP regions span residues 196 to 222 (AMAA…TLRS), 203 to 207 (EEEEE), and 221 to 222 (RS). Serine 200 is modified (phosphoserine). Positions 200 to 210 (SEDEEEEEEAL) are enriched in acidic residues. Positions 201–211 (EDEEEEEEALE) match the MIT-interacting motif motif.

It belongs to the SNF7 family. Probable core component of the endosomal sorting required for transport complex III (ESCRT-III). ESCRT-III components are thought to multimerize to form a flat lattice on the perimeter membrane of the endosome. Several assembly forms of ESCRT-III may exist that interact and act sequentially. Forms a metastable monomer in solution; its core structure (without part of the putative autoinhibitory C-terminal acidic region) oligomerizes into a flat lattice via two different dimerization interfaces. In vitro, heteromerizes with CHMP2A (but not CHMP4) to form helical tubular structures that expose membrane-interacting sites on the outside whereas VPS4B can associate on the inside of the tubule. May interact with IGFBP7; the relevance of such interaction however remains unclear. Interacts with CHMP2A. Interacts with CHMP4A; the interaction requires the release of CHMP4A autoinhibition. Interacts with VPS4A. Interacts with STAMBP; the interaction appears to relieve the autoinhibition of CHMP3. Interacts with VTA1.

The protein resides in the cytoplasm. It is found in the cytosol. The protein localises to the membrane. It localises to the endosome. Its subcellular location is the late endosome membrane. Functionally, probable core component of the endosomal sorting required for transport complex III (ESCRT-III) which is involved in multivesicular bodies (MVBs) formation and sorting of endosomal cargo proteins into MVBs. MVBs contain intraluminal vesicles (ILVs) that are generated by invagination and scission from the limiting membrane of the endosome and mostly are delivered to lysosomes enabling degradation of membrane proteins, such as stimulated growth factor receptors, lysosomal enzymes and lipids. The MVB pathway appears to require the sequential function of ESCRT-O, -I,-II and -III complexes. ESCRT-III proteins mostly dissociate from the invaginating membrane before the ILV is released. The ESCRT machinery also functions in topologically equivalent membrane fission events, such as the terminal stages of cytokinesis and the budding of enveloped viruses (lentiviruses). ESCRT-III proteins are believed to mediate the necessary vesicle extrusion and/or membrane fission activities, possibly in conjunction with the AAA ATPase VPS4. Selectively binds to phosphatidylinositol 3,5-bisphosphate PtdIns(3,5)P2 and PtdIns(3,4)P2 in preference to other phosphoinositides tested. Involved in late stages of cytokinesis. Plays a role in endosomal sorting/trafficking of EGF receptor. The protein is Charged multivesicular body protein 3 (CHMP3) of Bos taurus (Bovine).